Here is a 279-residue protein sequence, read N- to C-terminus: Zinc-finger homeodomain protein 1 (279 aa).

Residues 1–13 (MDFDDHDDGDEEM) are compositionally biased toward acidic residues. Residues 1-47 (MDFDDHDDGDEEMPPMPVSSSYETPPQHGLAGGGMAPKPPGEIGSHV) form a disordered region. The segment at 57–106 (YRECLKNHAVGIGGHAVDGCGEFMAAGEEGTIDALRCAACNCHRNFHRKE) adopts a ZF-HD dimerization-type; degenerate zinc-finger fold. A disordered region spans residues 157-191 (AAAAAAGGHPQRPLALPSTSHSGRDDGDDLSGMVG). The segment at residues 215-278 (KKRFRTKFTQ…NNKHTLGKKL (64 aa)) is a DNA-binding region (homeobox).

In terms of assembly, homo- and heterodimer with other ZFHD proteins.

The protein resides in the nucleus. Functionally, putative transcription factor. The protein is Zinc-finger homeodomain protein 1 (ZHD1) of Oryza sativa subsp. indica (Rice).